Here is a 657-residue protein sequence, read N- to C-terminus: MGGLCSRSSSVNNAPGGTFAHVNGHHLNNNASDLNSHSGESGLKDDPSPVTENVDDNKHTSESFSFPIVSSGSHPQNIEDGIPRLSRVLSQKSRSTKSRQAAVAKVSEVSSLLGRAGTMGLGKAVDVLDTLGSSMTNLNLSGGFSSATTVKGNKISILSFEVANTIVKGANLMHSLSKDSITHLKEVVLPSEGVQNLISKDMDELLRIAAADKREELRIFSGEVVRFGNRCKDPQYHNLDRFFDRLGSEFTPQKHLKQEAETIMHQMMSFVHFTADLYHELHALDRFEQDYQRKIQEEENPSTAQRGVGDTLAILRTELKSQKKHVRNLKKKSLWSRILEEVMEKLVDVVHFLHLEIHEAFGGADPDKPANDPPINHKKLGSAGLALHYANIITQIDTLVSRSSTMPASTRDALYQGLPPSIKSALRSRIQSFQVKEELTVPQIKAEMEKTLQWLVPVATNTTKAHHGFGWVGEWASSGSEANQRPAGQTILRIDTLHHADKEKTEAYILDLVVWLHHLVTQVRATTGYGLRSPVKSPIRSPNQKTIQLSSGSHNPSMGLPLLTTEDQEMLRDVSKRRKTPGISKSQEFETVAKARLCKHHRLSKSSSHSPMMGEMMKNKKDTFSTRRPSSVPIIDFDIDRMKALDVIDRVDTIRSL.

4 stretches are compositionally biased toward polar residues: residues 1–15, 26–39, 62–76, and 540–556; these read MGGL…NNAP, HLNN…SHSG, ESFS…SHPQ, and RSPN…SHNP. Disordered stretches follow at residues 1–80 and 534–559; these read MGGL…NIED and PVKS…PSMG. G2 carries the N-myristoyl glycine lipid modification.

It is found in the nucleus. Its function is as follows. Promotes seedling growth probably via the regulation of phytosulfokine (PSK) signaling; PSK are peptide phytohormones acting as growth factors. Together with PSI2 and PSI3, required during vegetative growth and reproduction. May also have a function in carbohydrate metabolism. This chain is Protein PSK SIMULATOR 1, found in Arabidopsis thaliana (Mouse-ear cress).